Here is a 650-residue protein sequence, read N- to C-terminus: Chaperone protein DnaK (650 aa).

Phosphothreonine; by autocatalysis is present on threonine 200. A disordered region spans residues 614–634; it reads AGAAGAAGAAEGAAHAGGAQQ.

Belongs to the heat shock protein 70 family.

Acts as a chaperone. The protein is Chaperone protein DnaK of Burkholderia cenocepacia (strain ATCC BAA-245 / DSM 16553 / LMG 16656 / NCTC 13227 / J2315 / CF5610) (Burkholderia cepacia (strain J2315)).